Reading from the N-terminus, the 671-residue chain is DNA ligase (671 aa).

Residues Asp-32 to Asp-36, Ser-81 to Leu-82, and Glu-113 each bind NAD(+). The active-site N6-AMP-lysine intermediate is the Lys-115. NAD(+) contacts are provided by Arg-136, Glu-173, Lys-290, and Lys-314. Zn(2+)-binding residues include Cys-408, Cys-411, Cys-426, and Cys-432. In terms of domain architecture, BRCT spans Glu-593–Ser-671.

It belongs to the NAD-dependent DNA ligase family. LigA subfamily. Requires Mg(2+) as cofactor. Mn(2+) serves as cofactor.

It catalyses the reaction NAD(+) + (deoxyribonucleotide)n-3'-hydroxyl + 5'-phospho-(deoxyribonucleotide)m = (deoxyribonucleotide)n+m + AMP + beta-nicotinamide D-nucleotide.. DNA ligase that catalyzes the formation of phosphodiester linkages between 5'-phosphoryl and 3'-hydroxyl groups in double-stranded DNA using NAD as a coenzyme and as the energy source for the reaction. It is essential for DNA replication and repair of damaged DNA. The protein is DNA ligase of Escherichia coli O1:K1 / APEC.